We begin with the raw amino-acid sequence, 539 residues long: Phosphoenolpyruvate carboxykinase (ATP) (539 aa).

Substrate is bound by residues R61, Y195, and K201. ATP contacts are provided by residues K201, H220, and 238-246 (GLSGTGKTT). K201 and H220 together coordinate Mn(2+). D259 serves as a coordination point for Mn(2+). Positions 287, 325, and 450 each coordinate ATP. R325 provides a ligand contact to substrate.

The protein belongs to the phosphoenolpyruvate carboxykinase (ATP) family. It depends on Mn(2+) as a cofactor.

The protein resides in the cytoplasm. It catalyses the reaction oxaloacetate + ATP = phosphoenolpyruvate + ADP + CO2. It functions in the pathway carbohydrate biosynthesis; gluconeogenesis. Functionally, involved in the gluconeogenesis. Catalyzes the conversion of oxaloacetate (OAA) to phosphoenolpyruvate (PEP) through direct phosphoryl transfer between the nucleoside triphosphate and OAA. This Methylorubrum extorquens (strain CM4 / NCIMB 13688) (Methylobacterium extorquens) protein is Phosphoenolpyruvate carboxykinase (ATP).